Consider the following 185-residue polypeptide: Neuronal vesicle trafficking-associated protein 1 (185 aa).

The Cytoplasmic segment spans residues 1–82 (MVKLGNNFAE…ITEGVTERFK (82 aa)). The helical; Signal-anchor for type II membrane protein transmembrane segment at 83 to 103 (VSVLVLFALAFLTCVVFLVVY) threads the bilayer. Over 104-185 (KVYKYDRACP…QETEAAEKSA (82 aa)) the chain is Lumenal. Residues 129–164 (ESYYTEQDSSAREKFYTVINHYNLAKQSITRSVSPW) are required for GRIP1 interaction.

Belongs to the NSG family. As to quaternary structure, forms a complex with GRIP1, GRIA2 and STX12; controls the intracellular fate of AMPAR and the endosomal sorting of the GRIA2 subunit toward recycling and membrane targeting. Interacts with GRIP1. Interacts with STX12. Interacts with APP; could regulate APP processing. Interacts with FAM171A1. In terms of tissue distribution, widely expressed in brain and spinal cord. Expressed in neurons during maturation and synapse formation.

It is found in the membrane. Its subcellular location is the golgi apparatus. The protein localises to the trans-Golgi network membrane. It localises to the endosome membrane. The protein resides in the cell projection. It is found in the dendrite. Its subcellular location is the early endosome membrane. The protein localises to the late endosome membrane. It localises to the lysosome lumen. The protein resides in the recycling endosome membrane. It is found in the cytoplasmic vesicle membrane. Its subcellular location is the golgi stack membrane. The protein localises to the endosome. It localises to the multivesicular body membrane. The protein resides in the endoplasmic reticulum membrane. Functionally, plays a role in the recycling mechanism in neurons of multiple receptors, including AMPAR, APP and L1CAM and acts at the level of early endosomes to promote sorting of receptors toward a recycling pathway. Regulates sorting and recycling of GRIA2 through interaction with GRIP1 and then contributes to the regulation of synaptic transmission and plasticity by affecting the recycling and targeting of AMPA receptors to the synapse. Is required for faithful sorting of L1CAM to axons by facilitating trafficking from somatodendritic early endosome or the recycling endosome. In an other hand, induces apoptosis via the activation of CASP3 in response to DNA damage. The sequence is that of Neuronal vesicle trafficking-associated protein 1 from Rattus norvegicus (Rat).